The primary structure comprises 112 residues: DNA-binding protein PF1087 (112 aa).

The protein belongs to the PDCD5 family.

In Pyrococcus furiosus (strain ATCC 43587 / DSM 3638 / JCM 8422 / Vc1), this protein is DNA-binding protein PF1087.